Here is a 359-residue protein sequence, read N- to C-terminus: Peptide chain release factor 1 (359 aa).

Position 236 is an N5-methylglutamine (Gln236).

This sequence belongs to the prokaryotic/mitochondrial release factor family. In terms of processing, methylated by PrmC. Methylation increases the termination efficiency of RF1.

Its subcellular location is the cytoplasm. Its function is as follows. Peptide chain release factor 1 directs the termination of translation in response to the peptide chain termination codons UAG and UAA. The sequence is that of Peptide chain release factor 1 (prfA) from Mycoplasma genitalium (strain ATCC 33530 / DSM 19775 / NCTC 10195 / G37) (Mycoplasmoides genitalium).